The sequence spans 341 residues: Glyceraldehyde-3-phosphate dehydrogenase, cytosolic (341 aa).

NAD(+) is bound by residues 15-16, D37, and R84; that span reads RI. Residues 155 to 157, T186, 215 to 216, and R238 each bind D-glyceraldehyde 3-phosphate; these read SCT and TG. C156 (nucleophile) is an active-site residue. An NAD(+)-binding site is contributed by N320.

This sequence belongs to the glyceraldehyde-3-phosphate dehydrogenase family. In terms of assembly, homotetramer.

It is found in the cytoplasm. The enzyme catalyses D-glyceraldehyde 3-phosphate + phosphate + NAD(+) = (2R)-3-phospho-glyceroyl phosphate + NADH + H(+). The protein operates within carbohydrate degradation; glycolysis; pyruvate from D-glyceraldehyde 3-phosphate: step 1/5. Functionally, key enzyme in glycolysis that catalyzes the first step of the pathway by converting D-glyceraldehyde 3-phosphate (G3P) into 3-phospho-D-glyceroyl phosphate. Essential for the maintenance of cellular ATP levels and carbohydrate metabolism. This Magnolia liliiflora (Mulan magnolia) protein is Glyceraldehyde-3-phosphate dehydrogenase, cytosolic (GAPC).